The primary structure comprises 892 residues: NACHT, LRR and PYD domains-containing protein 6 (892 aa).

The Pyrin domain maps to 1-103 (MDQPEAPCSS…AAQLQERRLQ (103 aa)). Residues 158 to 181 (APEEAMGPAEEPEPGRARRSDTHT) form a disordered region. Basic and acidic residues predominate over residues 170 to 181 (EPGRARRSDTHT). An NACHT domain is found at 196–513 (LTVVLQGPAG…EFLAALSYLL (318 aa)). 202-209 (GPAGIGKT) provides a ligand contact to ATP. Residues 352-356 (KDKKK) are disordered. The stretch at 462 to 487 (EKELEQLELRGSKVQTLFLSKKELPG) is one LRR 1 repeat. The disordered stretch occupies residues 590 to 614 (APEVTEGAKGLEDTEEPEEEEEGEE). Residues 602–614 (DTEEPEEEEEGEE) show a composition bias toward acidic residues. 4 LRR repeats span residues 727 to 747 (LCHLSSLTLSHCKLPDAVCRD), 755 to 778 (APALTELGLLHNRLSEAGLRMLSE), 811 to 834 (SPALTTLDLSGCQLPAPMVTYLCA), and 845 to 868 (TLSLASVELSEQSLQELQAVKRAK).

Belongs to the NLRP family. As to quaternary structure, homomultimer; forms the NLRP6 inflammasome polymeric complex, a filament composed of homopolymers in response to pathogens and other damage-associated signals. The core of NLRP6 inflammasomes consists of a signal sensor component (NLRP6), an adapter (PYCARD/ASC), which recruits effector pro-inflammatory caspases (CASP1 and CASP4). Interacts (via pyrin domain) with PYCARD/ASC (via pyrin domain); interaction takes place following NLRP6 activation and formation of liquid-liquid phase separation (LLPS), initiating nucleation which greatly enhances further addition of soluble PYCARD/ASC molecules to the speck in a prion-like polymerization process. Clustered PYCARD/ASC nucleates the formation of CASP1 (or possibly CASP4) filaments through the interaction of their respective CARD domains, acting as a platform for CASP1 polymerization. CASP1 filament formation increases local enzyme concentration, resulting in trans-autocleavage and activation. Active CASP1 then processes IL1B and IL18 precursors, leading to the release of mature cytokines in the extracellular milieu and inflammatory response. Interacts with DHX15. Polyubiquitinated with 'Lys-63'-linked chains, promoting the interaction with PYCARD/ASC and formation of the NLRP6 inflammasome. Deubiquitination by CYLD decreases the interaction with PYCARD/ASC. Expressed in peripheral blood leukocytes, predominantly in granulocytes and, at lower levels, in CD4(+) and CD8(+) T-cells. Expressed in colonic myofibroblasts (at protein level).

The protein localises to the cytoplasm. It is found in the cytosol. Its subcellular location is the inflammasome. The protein resides in the cell membrane. It localises to the nucleus membrane. Its function is as follows. Acts as the sensor component of the NLRP6 inflammasome, which mediates inflammasome activation in response to various pathogen-associated signals, leading to maturation and secretion of IL1B and IL18. Inflammasomes are supramolecular complexes that assemble in the cytosol in response to pathogens and other damage-associated signals and play critical roles in innate immunity and inflammation. Acts as a recognition receptor (PRR): recognizes and binds specific pathogens and other damage-associated signals, such as lipoteichoic acid (LTA), a cell-wall component of Gram-positive bacteria, or double stranded RNA (dsRNA). May also recognize and bind lipopolysaccharide (LPS), a major component of the outer membrane of Gram-negative bacteria; however, LPS is probably not a major activator of the NLRP6 inflammasome. Following LTA- or dsRNA-binding, NLRP6 undergoes liquid-liquid phase separation (LLPS), enhancing multivalent interactions, an essential step for the formation of the NLRP6 inflammasome polymeric complex. The NLRP6 inflammasome acts by promoting recruitment of effector pro-inflammatory caspases (CASP1 and/or CASP4) that catalyze maturation and secretion of IL1B and IL18 in the extracellular milieu. The NLRP6 inflammasome plays a central role in the maintenance of epithelial integrity and host defense against microbial infections in the intestine. Required to restrict infection against Gram-positive bacteria by recognizing lipoteichoic acid (LTA), leading to recruitment of CASP4 and CASP1, and subsequent maturation and secretion of IL1B and IL18. Involved in intestinal antiviral innate immunity together with DHX15: recognizes and binds viral dsRNA to restrict infection by enteric viruses through the interferon pathway and GSDMD-dependent release of IL18. Required to prevent infection by the apicomplexan parasite Cryptosporidium in enterocytes by promoting GSDMD-dependent release of IL18. The NLRP6 inflammasome may also regulate the gut microbiota composition by acting as a sensor of microbiota-associated metabolites to form a PYCARD/ASC-dependent inflammasome for downstream IL18 release and secretion of antimicrobial peptides. Essential for gut mucosal self-renewal and proliferation. Regulate mucus secretion in an inflammasome- and autophagy-dependent manner to prevent invasion by enteric bacteria,. During systemic bacterial infections, the NLRP6 inflammasome negatively regulates neutrophil recruitment and neutrophil extracellular traps (NETs) formation. May promote peripheral nerve recovery following injury via an inflammasome-independent mechanism. The sequence is that of NACHT, LRR and PYD domains-containing protein 6 from Homo sapiens (Human).